Here is a 131-residue protein sequence, read N- to C-terminus: UPF0102 protein YraN (131 aa).

The segment covering 1–19 has biased composition (polar residues); that stretch reads MATVPTRSGSPRQLTTKQT. Residues 1–21 are disordered; that stretch reads MATVPTRSGSPRQLTTKQTGD.

It belongs to the UPF0102 family.

The sequence is that of UPF0102 protein YraN from Escherichia coli O127:H6 (strain E2348/69 / EPEC).